The following is a 257-amino-acid chain: Isoprenyl transferase (257 aa).

Asp-34 is a catalytic residue. Asp-34 contributes to the Mg(2+) binding site. Residues 35-38 (GNGR), Trp-39, Arg-47, His-51, and 79-81 (STE) contribute to the substrate site. Asn-82 functions as the Proton acceptor in the catalytic mechanism. Substrate contacts are provided by residues Trp-83, Arg-85, Arg-202, and 208-210 (RLS). Residue Glu-221 coordinates Mg(2+).

This sequence belongs to the UPP synthase family. As to quaternary structure, homodimer. The cofactor is Mg(2+).

Catalyzes the condensation of isopentenyl diphosphate (IPP) with allylic pyrophosphates generating different type of terpenoids. The polypeptide is Isoprenyl transferase (Geobacillus kaustophilus (strain HTA426)).